A 593-amino-acid chain; its full sequence is Thiol:disulfide interchange protein DsbD (593 aa).

Residues 1-21 (MRALLTFFVAGLLVLSSPAMA) form the signal peptide. 2 disulfides stabilise this stretch: cysteine 130–cysteine 136 and cysteine 207–cysteine 328. The next 8 helical transmembrane spans lie at 193 to 215 (LLFLALGVGLAFTPCVLPMYPIL), 235 to 257 (LVYVQGMALTYTLLGLVVASAGL), 269 to 291 (LIGLSILFVTLALSMFGVYTLQL), 318 to 340 (GAISGLVCSPCTTAPLSGALLYV), 347 to 369 (LTGGVALYALAMGMGIPLILVAV), 384 to 401 (RVKTLFGFVLLAAPIFLL), 408 to 425 (MWSTALWSALGIAAFGWL), and 440 to 462 (SAVGIIAVLGLFASAQPALNYWF). A Thioredoxin domain is found at 451–593 (FASAQPALNY…FLEHIQRISN (143 aa)). Cysteine 508 and cysteine 511 are disulfide-bonded.

This sequence belongs to the thioredoxin family. DsbD subfamily.

The protein resides in the cell inner membrane. The catalysed reaction is [protein]-dithiol + NAD(+) = [protein]-disulfide + NADH + H(+). The enzyme catalyses [protein]-dithiol + NADP(+) = [protein]-disulfide + NADPH + H(+). Required to facilitate the formation of correct disulfide bonds in some periplasmic proteins and for the assembly of the periplasmic c-type cytochromes. Acts by transferring electrons from cytoplasmic thioredoxin to the periplasm. This transfer involves a cascade of disulfide bond formation and reduction steps. In Vibrio vulnificus (strain CMCP6), this protein is Thiol:disulfide interchange protein DsbD.